A 232-amino-acid polypeptide reads, in one-letter code: Ornithine carbamoyltransferase (232 aa).

Carbamoyl phosphate contacts are provided by residues Gln-15, Arg-39, and 66–69 (HPTQ). Residues Asn-99, Asp-163, and 167–168 (SM) contribute to the L-ornithine site. Carbamoyl phosphate is bound by residues 204–207 (HCLP) and Thr-232.

Belongs to the aspartate/ornithine carbamoyltransferase superfamily. OTCase family.

The protein localises to the cytoplasm. It catalyses the reaction carbamoyl phosphate + L-ornithine = L-citrulline + phosphate + H(+). Its pathway is amino-acid biosynthesis; L-arginine biosynthesis; L-arginine from L-ornithine and carbamoyl phosphate: step 1/3. Its function is as follows. Reversibly catalyzes the transfer of the carbamoyl group from carbamoyl phosphate (CP) to the N(epsilon) atom of ornithine (ORN) to produce L-citrulline. This chain is Ornithine carbamoyltransferase (argF), found in Neisseria sicca.